The primary structure comprises 627 residues: Interferon-induced GTP-binding protein MxB (627 aa).

In terms of domain architecture, Dynamin-type G spans 34-307 (DLALPAIAVI…LVHHIQRSLP (274 aa)). Residues 44 to 51 (GDQSSGKS) form a G1 motif region. Residue 44-51 (GDQSSGKS) participates in GTP binding. The segment at 69 to 71 (VTR) is G2 motif. The tract at residues 145-148 (DLPG) is G3 motif. GTP-binding positions include 145–149 (DLPGI) and 214–217 (TKPD). The segment at 214–217 (TKPD) is G4 motif. The interval 246–249 (RCRG) is G5 motif. A GED domain is found at 541 to 627 (LSEMKLHLES…MKAQNLLATY (87 aa)).

This sequence belongs to the TRAFAC class dynamin-like GTPase superfamily. Dynamin/Fzo/YdjA family.

The protein resides in the cytoplasm. The protein is Interferon-induced GTP-binding protein MxB (mxb) of Danio rerio (Zebrafish).